We begin with the raw amino-acid sequence, 212 residues long: ER lumen protein-retaining receptor 1 (212 aa).

Topologically, residues 1–4 (MNLF) are lumenal. The helical transmembrane segment at 5–24 (RFLGDLSHLLAIILLLLKIW) threads the bilayer. The Cytoplasmic portion of the chain corresponds to 25 to 32 (KSRSCAGI). A helical membrane pass occupies residues 33–52 (SGKSQVLFAVVFTARYLDLF). The tract at residues 47–48 (RY) is interaction with the K-D-E-L motif on target proteins. At 53-58 (TNYISL) the chain is on the lumenal side. The chain crosses the membrane as a helical span at residues 59–79 (YNTCMKVVYIACSFTTVWLIY). Over 80-92 (SKFKATYDGNHDT) the chain is Cytoplasmic. The chain crosses the membrane as a helical span at residues 93 to 110 (FRVEFLVVPTAILAFLVN). Residues 111–116 (HDFTPL) are Lumenal-facing. Residues 117–135 (EILWTFSIYLESVAILPQL) form a helical membrane-spanning segment. Topologically, residues 136–149 (FMVSKTGEAETITS) are cytoplasmic. A helical membrane pass occupies residues 150-168 (HYLFALGVYRTLYLFNWIW). The interaction with the K-D-E-L motif on target proteins stretch occupies residues 159–169 (RTLYLFNWIWR). The Lumenal segment spans residues 169–178 (RYHFEGFFDL). Residues 179–199 (IAIVAGLVQTVLYCDFFYLYI) form a helical membrane-spanning segment. Topologically, residues 200 to 212 (TKVLKGKKLSLPA) are cytoplasmic. An important for recycling of cargo proteins with the sequence motif K-D-E-L from the Golgi to the endoplasmic reticulum region spans residues 204–207 (KGKK). Phosphoserine; by PKA is present on serine 209.

The protein belongs to the ERD2 family. Upon ligand binding the receptor oligomerizes and interacts with components of the transport machinery such as ARFGAP1 and ARF1. Phosphorylation by PKA at Ser-209 is required for endoplasmic reticulum retention function.

The protein localises to the golgi apparatus membrane. Its subcellular location is the cytoplasmic vesicle. The protein resides in the COPI-coated vesicle membrane. It localises to the endoplasmic reticulum membrane. It is found in the endoplasmic reticulum-Golgi intermediate compartment membrane. Receptor for the C-terminal sequence motif K-D-E-L that is present on endoplasmic reticulum resident proteins and that mediates their recycling from the Golgi back to the endoplasmic reticulum. The polypeptide is ER lumen protein-retaining receptor 1 (KDELR1) (Homo sapiens (Human)).